The chain runs to 364 residues: Probable UDP-arabinopyranose mutase 4 (364 aa).

The DXD motif motif lies at 106 to 108 (DDD). Arg154 is a glycosylation site (N-linked (Glc...) arginine).

The protein belongs to the RGP family. Heteromers with RGP1 and RGP2. Requires Mn(2+) as cofactor. Mg(2+) serves as cofactor. In terms of processing, reversibly glycosylated in vitro by UDP-glucose, UDP-xylose and UDP-galactose, but not UDP-mannose. In terms of tissue distribution, specifically expressed in developing seeds.

It localises to the cytoplasm. Its subcellular location is the cytosol. The protein resides in the golgi apparatus. The enzyme catalyses UDP-beta-L-arabinofuranose = UDP-beta-L-arabinopyranose. In terms of biological role, probable UDP-L-arabinose mutase involved in the biosynthesis of cell wall non-cellulosic polysaccharides. The chain is Probable UDP-arabinopyranose mutase 4 from Arabidopsis thaliana (Mouse-ear cress).